The primary structure comprises 109 residues: Large ribosomal subunit protein uL22 (109 aa).

The protein belongs to the universal ribosomal protein uL22 family. Part of the 50S ribosomal subunit.

Functionally, this protein binds specifically to 23S rRNA; its binding is stimulated by other ribosomal proteins, e.g. L4, L17, and L20. It is important during the early stages of 50S assembly. It makes multiple contacts with different domains of the 23S rRNA in the assembled 50S subunit and ribosome. In terms of biological role, the globular domain of the protein is located near the polypeptide exit tunnel on the outside of the subunit, while an extended beta-hairpin is found that lines the wall of the exit tunnel in the center of the 70S ribosome. The sequence is that of Large ribosomal subunit protein uL22 from Azoarcus sp. (strain BH72).